Consider the following 641-residue polypeptide: Chaperone protein DnaK (641 aa).

Threonine 200 bears the Phosphothreonine; by autocatalysis mark. A compositionally biased stretch (low complexity) spans alanine 606–lysine 623. A disordered region spans residues alanine 606–aspartate 627.

This sequence belongs to the heat shock protein 70 family.

In terms of biological role, acts as a chaperone. This is Chaperone protein DnaK from Xanthomonas euvesicatoria pv. vesicatoria (strain 85-10) (Xanthomonas campestris pv. vesicatoria).